Reading from the N-terminus, the 284-residue chain is Large ribosomal subunit protein uL2 (284 aa).

2 disordered regions span residues 28–50 (ELKG…FKKS) and 232–284 (RGTA…DRRK). Over residues 36–46 (RSVRPNKKLSF) the composition is skewed to basic residues. A compositionally biased stretch (basic and acidic residues) spans 240-250 (DHPHGGGEGRH). The segment covering 264 to 284 (KGLKTRDKRKSNKWIVKDRRK) has biased composition (basic residues).

The protein belongs to the universal ribosomal protein uL2 family. As to quaternary structure, part of the 50S ribosomal subunit. Forms a bridge to the 30S subunit in the 70S ribosome.

One of the primary rRNA binding proteins. Required for association of the 30S and 50S subunits to form the 70S ribosome, for tRNA binding and peptide bond formation. It has been suggested to have peptidyltransferase activity; this is somewhat controversial. Makes several contacts with the 16S rRNA in the 70S ribosome. This chain is Large ribosomal subunit protein uL2, found in Chlamydia trachomatis serovar L2 (strain ATCC VR-902B / DSM 19102 / 434/Bu).